Reading from the N-terminus, the 725-residue chain is Rab-like protein 6 (725 aa).

Met-1 bears the N-acetylmethionine mark. The segment at 39–279 (GVQYNMKIVI…IFLEMMEARS (241 aa)) is small GTPase-like. GTP-binding positions include 50–57 (GDRNTGKT), 100–104 (DVVDK), and 177–179 (YRD). 2 disordered regions span residues 281–364 (GHAS…PAPA) and 378–725 (PAAE…YEEL). Composition is skewed to low complexity over residues 291–325 (QSPSSGSQSPVVPPSAVSTGSSSPSTPQPAPQLSL) and 343–353 (AMPSSVHSSAP). Residues 410 to 427 (GLDRSFLEDTSVPKDKKV) are compositionally biased toward basic and acidic residues. 7 positions are modified to phosphoserine: Ser-414, Ser-436, Ser-438, Ser-480, Ser-482, Ser-483, and Ser-502. Positions 499-514 (QQCSEPETKWSSTKVS) are enriched in polar residues. Basic and acidic residues predominate over residues 537–549 (DSERPQEGKDKQV). A compositionally biased stretch (acidic residues) spans 569–578 (DDPDFESDES). A phosphoserine mark is found at Ser-575 and Ser-594. Thr-597 carries the phosphothreonine modification. A compositionally biased stretch (basic and acidic residues) spans 632 to 649 (MGPKESSDEDRDSKLPSK). A phosphoserine mark is found at Ser-637, Ser-638, and Ser-644. The interval 652-690 (KKKKKKSKEEEEKTTKKKSKHKKSKDKEEGKEDRKKKRK) is interaction with CDKN2A. The span at 666–675 (TKKKSKHKKS) shows a compositional bias: basic residues. A compositionally biased stretch (gly residues) spans 707 to 725 (LGGGAPGSRHPGGGDYEEL).

The protein belongs to the small GTPase superfamily. Rab family.

Its subcellular location is the nucleus. It localises to the cytoplasm. Its function is as follows. May enhance cellular proliferation. May reduce growth inhibitory activity of CDKN2A. This Mus musculus (Mouse) protein is Rab-like protein 6 (Rabl6).